Here is a 188-residue protein sequence, read N- to C-terminus: MTIKSDKWIRRMAAEHGMIEPFSPELVREANGQKIVSYGTSSYGYDIRCAREFKVFTNINSTVVDPKNFDPKSFVEIESDVCIIPPNSFALARTMEYFRIPRSVLTVCLGKSTYARCGIIVNVTPFEPEWEGHVTLEFSNTTPLPAKIYAGEGCAQVLFFESDEICETSYKDRGGKYQGQEGVTLPKI.

Residues 111–116 (KSTYAR), 135–137 (TLE), glutamine 156, tyrosine 170, and glutamine 180 each bind dCTP. The Proton donor/acceptor role is filled by glutamate 137.

Belongs to the dCTP deaminase family. In terms of assembly, homotrimer.

The enzyme catalyses dCTP + H2O + H(+) = dUTP + NH4(+). It participates in pyrimidine metabolism; dUMP biosynthesis; dUMP from dCTP (dUTP route): step 1/2. Its function is as follows. Catalyzes the deamination of dCTP to dUTP. This Dechloromonas aromatica (strain RCB) protein is dCTP deaminase.